An 80-amino-acid polypeptide reads, in one-letter code: UPF0512 protein J (80 aa).

Belongs to the UPF0512 family.

This Dictyostelium discoideum (Social amoeba) protein is UPF0512 protein J.